The chain runs to 369 residues: Core histone macro-H2A.1 (369 aa).

Residues K7 and K9 each carry the N6-lactoyllysine; alternate modification. The Histone H2A domain maps to 15–90 (RSAKAGVIFP…ILLAVANDEE (76 aa)). K18 is subject to N6-methyllysine. Residue K116 is modified to N6-acetyllysine; alternate. A Glycyl lysine isopeptide (Lys-Gly) (interchain with G-Cter in ubiquitin); alternate cross-link involves residue K116. K117 is covalently cross-linked (Glycyl lysine isopeptide (Lys-Gly) (interchain with G-Cter in ubiquitin)). K123 carries the N6-acetyllysine; alternate modification. Position 123 is an N6,N6-dimethyllysine; alternate (K123). A Glycyl lysine isopeptide (Lys-Gly) (interchain with G-Cter in SUMO2); alternate cross-link involves residue K123. Residues 128–180 (ITPPPAKKAKSPSQKKTVSKKTGGKKGARKSKKKQGEVSKSASADSTTEGTPA) form a disordered region. T129 carries the post-translational modification Phosphothreonine. Residues 144-160 (TVSKKTGGKKGARKSKK) are compositionally biased toward basic residues. Residues 165-177 (VSKSASADSTTEG) are compositionally biased toward polar residues. Residue K167 forms a Glycyl lysine isopeptide (Lys-Gly) (interchain with G-Cter in SUMO2) linkage. A phosphoserine mark is found at S170 and S173. T178 bears the Phosphothreonine mark. The 184-residue stretch at 184 to 367 (TVLSTKSLFL…IYVQEMAKLD (184 aa)) folds into the Macro domain. K189 participates in a covalent cross-link: Glycyl lysine isopeptide (Lys-Gly) (interchain with G-Cter in SUMO2). Residues D203, I204, V226, S275, G312, S313, G314, and N316 each coordinate a glycoprotein. K320 participates in a covalent cross-link: Glycyl lysine isopeptide (Lys-Gly) (interchain with G-Cter in SUMO2).

The protein belongs to the histone H2A family. The nucleosome is a histone octamer containing two molecules each of H2A, H2B, H3 and H4 assembled in one H3-H4 heterotetramer and two H2A-H2B heterodimers. In terms of processing, ADP-ribosylated. Monoubiquitinated at either Lys-116 or Lys-117. May also be polyubiquitinated. Ubiquitination is mediated by the CUL3/SPOP E3 complex and does not promote proteasomal degradation. Instead, it is required for enrichment in inactive X chromosome chromatin. In terms of tissue distribution, present in liver (at protein level).

It is found in the nucleus. Its subcellular location is the chromosome. Functionally, variant histone H2A which replaces conventional H2A in a subset of nucleosomes where it represses transcription. Nucleosomes wrap and compact DNA into chromatin, limiting DNA accessibility to the cellular machineries which require DNA as a template. Histones thereby play a central role in transcription regulation, DNA repair, DNA replication and chromosomal stability. DNA accessibility is regulated via a complex set of post-translational modifications of histones, also called histone code, and nucleosome remodeling. Isoform that specifically binds poly-ADP-ribose and O-acetyl-ADP-ribose and plays a key role in NAD(+) metabolism. Able to bind to the ends of poly-ADP-ribose chains created by PARP1 and cap them. This prevents PARP1 from further addition of ADP-ribose and thus limits the consumption of nuclear NAD(+), allowing the cell to maintain proper NAD(+) levels in both the nucleus and the mitochondria to promote proper mitochondrial respiration. In terms of biological role, in contrast to isoform 1, does not bind poly-ADP-ribose. This is Core histone macro-H2A.1 from Gallus gallus (Chicken).